The sequence spans 567 residues: 2-succinyl-5-enolpyruvyl-6-hydroxy-3-cyclohexene-1-carboxylate synthase (567 aa).

It belongs to the TPP enzyme family. MenD subfamily. Homodimer. It depends on Mg(2+) as a cofactor. Mn(2+) is required as a cofactor. Requires thiamine diphosphate as cofactor.

It catalyses the reaction isochorismate + 2-oxoglutarate + H(+) = 5-enolpyruvoyl-6-hydroxy-2-succinyl-cyclohex-3-ene-1-carboxylate + CO2. It participates in quinol/quinone metabolism; 1,4-dihydroxy-2-naphthoate biosynthesis; 1,4-dihydroxy-2-naphthoate from chorismate: step 2/7. It functions in the pathway quinol/quinone metabolism; menaquinone biosynthesis. Functionally, catalyzes the thiamine diphosphate-dependent decarboxylation of 2-oxoglutarate and the subsequent addition of the resulting succinic semialdehyde-thiamine pyrophosphate anion to isochorismate to yield 2-succinyl-5-enolpyruvyl-6-hydroxy-3-cyclohexene-1-carboxylate (SEPHCHC). The sequence is that of 2-succinyl-5-enolpyruvyl-6-hydroxy-3-cyclohexene-1-carboxylate synthase from Shewanella loihica (strain ATCC BAA-1088 / PV-4).